Reading from the N-terminus, the 247-residue chain is Ubiquinone biosynthesis O-methyltransferase (247 aa).

Residues arginine 39, glycine 70, aspartate 91, and methionine 134 each contribute to the S-adenosyl-L-methionine site.

Belongs to the methyltransferase superfamily. UbiG/COQ3 family.

The enzyme catalyses a 3-demethylubiquinol + S-adenosyl-L-methionine = a ubiquinol + S-adenosyl-L-homocysteine + H(+). It catalyses the reaction a 3-(all-trans-polyprenyl)benzene-1,2-diol + S-adenosyl-L-methionine = a 2-methoxy-6-(all-trans-polyprenyl)phenol + S-adenosyl-L-homocysteine + H(+). Its pathway is cofactor biosynthesis; ubiquinone biosynthesis. Functionally, O-methyltransferase that catalyzes the 2 O-methylation steps in the ubiquinone biosynthetic pathway. This is Ubiquinone biosynthesis O-methyltransferase from Cereibacter sphaeroides (strain KD131 / KCTC 12085) (Rhodobacter sphaeroides).